A 494-amino-acid chain; its full sequence is UDP-N-acetylmuramate--L-alanine ligase (494 aa).

140–146 (GTHGKTT) is an ATP binding site.

The protein belongs to the MurCDEF family.

Its subcellular location is the cytoplasm. The catalysed reaction is UDP-N-acetyl-alpha-D-muramate + L-alanine + ATP = UDP-N-acetyl-alpha-D-muramoyl-L-alanine + ADP + phosphate + H(+). Its pathway is cell wall biogenesis; peptidoglycan biosynthesis. Cell wall formation. The sequence is that of UDP-N-acetylmuramate--L-alanine ligase from Trichormus variabilis (strain ATCC 29413 / PCC 7937) (Anabaena variabilis).